A 247-amino-acid polypeptide reads, in one-letter code: MLLIPAIDLKDGHCVRLKQGDMDQSTTFGEDPAAMARKWADAGARRLHLVDLNGAFAGQPKNKAAIKAILAEVGSDIPVQLGGGIRDLDTIERYIDAGLRYVIIGTAAVKNPGFLKDACSAFGGHIIVGLDAKDGKVATDGWSKLTGHEVVDLARKFQDWGVESIIYTDIGRDGMLSGINIEATVKLAQALTIPVIASGGLAGMADIEKLCEVEDEGVEGVICGRAIYSGDLDFAAAQARADELAGA.

Asp8 (proton acceptor) is an active-site residue. The active-site Proton donor is the Asp131.

The protein belongs to the HisA/HisF family.

It localises to the cytoplasm. It carries out the reaction 1-(5-phospho-beta-D-ribosyl)-5-[(5-phospho-beta-D-ribosylamino)methylideneamino]imidazole-4-carboxamide = 5-[(5-phospho-1-deoxy-D-ribulos-1-ylimino)methylamino]-1-(5-phospho-beta-D-ribosyl)imidazole-4-carboxamide. The protein operates within amino-acid biosynthesis; L-histidine biosynthesis; L-histidine from 5-phospho-alpha-D-ribose 1-diphosphate: step 4/9. The sequence is that of 1-(5-phosphoribosyl)-5-[(5-phosphoribosylamino)methylideneamino] imidazole-4-carboxamide isomerase from Acidovorax sp. (strain JS42).